The sequence spans 121 residues: Large ribosomal subunit protein uL14 (121 aa).

Belongs to the universal ribosomal protein uL14 family. Part of the 50S ribosomal subunit. Forms a cluster with proteins L3 and L19. In the 70S ribosome, L14 and L19 interact and together make contacts with the 16S rRNA in bridges B5 and B8.

Functionally, binds to 23S rRNA. Forms part of two intersubunit bridges in the 70S ribosome. This Opitutus terrae (strain DSM 11246 / JCM 15787 / PB90-1) protein is Large ribosomal subunit protein uL14.